Here is a 165-residue protein sequence, read N- to C-terminus: PTS system glucose-specific EIIA component (165 aa).

The 105-residue stretch at 33–137 folds into the PTS EIIA type-1 domain; sequence DPVFAGRMMG…STITPIVITN (105 aa). Histidine 70 and histidine 85 together coordinate Zn(2+). The active-site Tele-phosphohistidine intermediate; for EIIA activity is histidine 85. Histidine 85 carries the post-translational modification Phosphohistidine; by HPr.

In terms of assembly, heterodimer with glycerol kinase (glpk). Requires Zn(2+) as cofactor.

The protein resides in the cytoplasm. The phosphoenolpyruvate-dependent sugar phosphotransferase system (sugar PTS), a major carbohydrate active transport system, catalyzes the phosphorylation of incoming sugar substrates concomitantly with their translocation across the cell membrane. The enzyme II complex composed of PtsG and Crr is involved in glucose transport. This chain is PTS system glucose-specific EIIA component (crr), found in Bacillus cereus (strain ATCC 14579 / DSM 31 / CCUG 7414 / JCM 2152 / NBRC 15305 / NCIMB 9373 / NCTC 2599 / NRRL B-3711).